A 451-amino-acid chain; its full sequence is C4-dicarboxylate transport protein (451 aa).

The next 9 helical transmembrane spans lie at 17–37, 53–73, 85–105, 153–173, 193–213, 231–251, 306–326, 339–359, and 361–381; these read SLYV…HFYP, LIKM…IAGM, LALL…LIVV, AFAK…GFAL, VLFT…FGAM, LMGS…GLIA, GYSF…VFIA, ITLL…TGSG, and IVLA…LALI.

Belongs to the dicarboxylate/amino acid:cation symporter (DAACS) (TC 2.A.23) family.

It is found in the cell inner membrane. Responsible for the transport of dicarboxylates such as succinate, fumarate, and malate from the periplasm across the membrane. This chain is C4-dicarboxylate transport protein, found in Paracidovorax citrulli (strain AAC00-1) (Acidovorax citrulli).